The chain runs to 20 residues: 54 kDa cell wall protein (20 aa).

A disordered region spans residues 1-20 (KVPVDDQFRRVNNGGATDTR).

It is found in the secreted. It localises to the cell wall. The sequence is that of 54 kDa cell wall protein from Arabidopsis thaliana (Mouse-ear cress).